The sequence spans 434 residues: Cysteine proteinase 6 (434 aa).

The first 19 residues, 1–19 (MKVLSALCVLLVSVATAKQ), serve as a signal peptide directing secretion. The propeptide at 20–113 (QLSELQYRNA…SEKVFGGVQA (94 aa)) is activation peptide. Intrachain disulfides connect C133-C178 and C169-C211. C136 is an active-site residue. N227 is a glycosylation site (N-linked (GlcNAc...) asparagine). C269 and C416 are oxidised to a cystine. H276 is an active-site residue. Residues 285-384 (SGSSGSQSQS…GGNSNSGDYP (100 aa)) form a disordered region. Positions 288–347 (SGSQSQSAGSQSQSSNNNWSESSQSQDSNSWSQSSQSQSSQDSNSWSQSSQSQGSNSFTG) are enriched in low complexity. An N-linked (GlcNAc...) asparagine glycan is attached at N305. Over residues 348 to 358 (AGTGSGSGSVS) the composition is skewed to gly residues. The segment covering 359–381 (GSGSASGSSSFSGSSNGGNSNSG) has biased composition (low complexity). Residue N394 is part of the active site.

Belongs to the peptidase C1 family.

It is found in the lysosome. The polypeptide is Cysteine proteinase 6 (cprF) (Dictyostelium discoideum (Social amoeba)).